We begin with the raw amino-acid sequence, 138 residues long: Basic phospholipase A2 homolog ammodytin L (138 aa).

The first 16 residues, M1–G16, serve as a signal peptide directing secretion. Cystine bridges form between C42–C131, C44–C60, C59–C111, C65–C138, C66–C104, C73–C97, and C91–C102. An important for membrane-damaging activities in eukaryotes and bacteria; heparin-binding region spans residues K121–G133.

The protein belongs to the phospholipase A2 family. Group II subfamily. S49 sub-subfamily. Expressed by the venom gland.

Its subcellular location is the secreted. Its function is as follows. Snake venom phospholipase A2 homolog that lacks enzymatic activity. Is very active in inducing myonecrosis in vivo and shows a potent calcium-independent membrane-damaging activity in vitro, most probably by binding and incorporating in the membrane. Also acts as a presynaptic neurotoxin. A model of myotoxic mechanism has been proposed: an apo Lys49-PLA2 is activated by the entrance of a hydrophobic molecule (e.g. fatty acid) at the hydrophobic channel of the protein leading to a reorientation of a monomer. This reorientation causes a transition between 'inactive' to 'active' states, causing alignment of C-terminal and membrane-docking sites (MDoS) side-by-side and putting the membrane-disruption sites (MDiS) in the same plane, exposed to solvent and in a symmetric position for both monomers. The MDoS region stabilizes the toxin on membrane by the interaction of charged residues with phospholipid head groups. Subsequently, the MDiS region destabilizes the membrane with penetration of hydrophobic residues. This insertion causes a disorganization of the membrane, allowing an uncontrolled influx of ions (i.e. calcium and sodium), and eventually triggering irreversible intracellular alterations and cell death. The sequence is that of Basic phospholipase A2 homolog ammodytin L from Vipera ammodytes ammodytes (Western sand viper).